The sequence spans 485 residues: Telomeric DNA-binding factor trf1 (485 aa).

The span at 1–20 (MSKRSLDPSDDFKGQKRLAI) shows a compositional bias: basic and acidic residues. Positions 1–23 (MSKRSLDPSDDFKGQKRLAIDPE) are disordered. Positions 400 to 457 (RRVANRRSWTKEEEEALLDGLDLVKGPRWSQILELYGPGGKKSEVLKYRNQVQLKDKA) constitute an HTH myb-type domain. The segment at residues 428 to 453 (WSQILELYGPGGKKSEVLKYRNQVQL) is a DNA-binding region (H-T-H motif).

In terms of assembly, homodimer.

The protein resides in the nucleus. Functionally, binds the telomeric double-stranded TTACAGG repeat and regulates telomere length. The chain is Telomeric DNA-binding factor trf1 (trf1) from Schizosaccharomyces pombe (strain 972 / ATCC 24843) (Fission yeast).